Reading from the N-terminus, the 347-residue chain is GMP reductase (347 aa).

108–131 (TDFEKTKQILIANPALNFLCIDVA) provides a ligand contact to NADP(+). K(+) is bound by residues G181 and G183. The active-site Thioimidate intermediate is C186. 216 to 239 (IISDGGCTMPGDVAKAFGGGADFV) serves as a coordination point for NADP(+).

The protein belongs to the IMPDH/GMPR family. GuaC type 1 subfamily. Homotetramer.

It catalyses the reaction IMP + NH4(+) + NADP(+) = GMP + NADPH + 2 H(+). Its function is as follows. Catalyzes the irreversible NADPH-dependent deamination of GMP to IMP. It functions in the conversion of nucleobase, nucleoside and nucleotide derivatives of G to A nucleotides, and in maintaining the intracellular balance of A and G nucleotides. The protein is GMP reductase of Enterobacter sp. (strain 638).